Here is a 240-residue protein sequence, read N- to C-terminus: DISARM protein DrmC (240 aa).

The PLD phosphodiesterase domain maps to 174–201; that stretch reads GYSSLHAKVIMVDEEKAFVSSANLSYNG. Residues histidine 179, lysine 181, and aspartate 186 contribute to the active site.

The protein belongs to the phospholipase D family.

Its subcellular location is the cytoplasm. Its function is as follows. Component of antiviral defense system DISARM (defense island system associated with restriction-modification), composed of DrmE, DrmA, DrmB, DrmC and DrmMII. DISARM is probably a multi-gene restriction module, this subunit is probably a phospholipase or nuclease. Expression of DISARM in B.subtilis (strain BEST7003) confers resistance to phages Nf, phi29, phi105, phi3T, SPO1, SPR and SPP1. Protection is over 10(7)-fold against phi3T, 10(4)-10(5)-fold against Nf, phi29, phi105 and SPR, 100-fold against SPO1 and 10-fold against SPP1. DISARM does not interfere with phage adsorption, but instead interferes with (phi3T) DNA replication early in its cycle, preventing replication, circularization and lysogeny and probably causes phage DNA degradation (DNA is degraded in SPP1-infected cells). The protein is DISARM protein DrmC of Bacillus paralicheniformis (strain ATCC 9945a / NCIMB 11709 / CD-2).